The primary structure comprises 213 residues: Uracil phosphoribosyltransferase (213 aa).

5-phospho-alpha-D-ribose 1-diphosphate is bound by residues Arg-78, Arg-103, and 131-139 (DPMLATGGT). Uracil is bound by residues Ile-197 and 202-204 (GDA). Residue Asp-203 participates in 5-phospho-alpha-D-ribose 1-diphosphate binding.

Belongs to the UPRTase family. The cofactor is Mg(2+).

The catalysed reaction is UMP + diphosphate = 5-phospho-alpha-D-ribose 1-diphosphate + uracil. The protein operates within pyrimidine metabolism; UMP biosynthesis via salvage pathway; UMP from uracil: step 1/1. With respect to regulation, allosterically activated by GTP. Functionally, catalyzes the conversion of uracil and 5-phospho-alpha-D-ribose 1-diphosphate (PRPP) to UMP and diphosphate. In Bifidobacterium adolescentis (strain ATCC 15703 / DSM 20083 / NCTC 11814 / E194a), this protein is Uracil phosphoribosyltransferase.